The following is a 387-amino-acid chain: MDLFEYQAKELFAKHNVPTTPGRVTDTAEGARAIATEIGHPVMVKAQVKIGGRGKAGGVKYAATPDDAYEHANNILGLDIKGHVVKKLLVAEASDIAEEYYISFLLDRANRTYLAMCSVEGGMEIEEVAATKPDRLAKVPVDAAKGVDLAFARSIAEQGHLPAEVLDAAAVTISKLWDLFVGEDATLVEVNPLVRTPDDQILALDGKVTLDANADFRHPDHVEFEDRAATDPLELKAKEHDLNYVKLDGQVGIIGNGAGLVMSTLDVVAYAGEKHGGVKPANFLDIGGGASAEVMAAGLDVVLGDSQVKSVFVNVFGGITSCDAVATGIVKALEILGAEANKPLVVRLDGNNVEEGRRILTDANHPLVTLVPTMDEAADKAAELASA.

The ATP-grasp domain occupies lysine 9 to lysine 236. ATP contacts are provided by residues lysine 45, glycine 52–glycine 54, serine 94, and glutamate 99. Mg(2+) is bound by residues asparagine 191 and aspartate 205. Residues asparagine 256 and glycine 318–threonine 320 contribute to the substrate site.

The protein belongs to the succinate/malate CoA ligase beta subunit family. In terms of assembly, heterotetramer of two alpha and two beta subunits. Requires Mg(2+) as cofactor.

It catalyses the reaction succinate + ATP + CoA = succinyl-CoA + ADP + phosphate. It carries out the reaction GTP + succinate + CoA = succinyl-CoA + GDP + phosphate. Its pathway is carbohydrate metabolism; tricarboxylic acid cycle; succinate from succinyl-CoA (ligase route): step 1/1. Functionally, succinyl-CoA synthetase functions in the citric acid cycle (TCA), coupling the hydrolysis of succinyl-CoA to the synthesis of either ATP or GTP and thus represents the only step of substrate-level phosphorylation in the TCA. The beta subunit provides nucleotide specificity of the enzyme and binds the substrate succinate, while the binding sites for coenzyme A and phosphate are found in the alpha subunit. In Mycobacterium marinum (strain ATCC BAA-535 / M), this protein is Succinate--CoA ligase [ADP-forming] subunit beta.